Consider the following 882-residue polypeptide: Cadherin-1 (882 aa).

An N-terminal signal peptide occupies residues 1-22 (MGPWSRSLSALLLLLQVSSWLC). Positions 23 to 154 (QEPEPCHPGF…SSSGLRRRKR (132 aa)) are excised as a propeptide. N-linked (GlcNAc...) asparagine glycosylation occurs at Asn-144. 5 Cadherin domains span residues 155-262 (DWVI…KPEF), 263-375 (TQEV…PPVF), 376-486 (NPTT…APIF), 487-593 (VPPE…DNAP), and 594-697 (IPEP…VCKK). At 155–709 (DWVIPPISCP…PIEAGLQIPA (555 aa)) the chain is on the extracellular side. Ca(2+) is bound at residue Asp-257. Ser-280 carries O-linked (Man...) serine glycosylation. O-linked (Man...) threonine glycosylation is present at Thr-285. Asp-288 provides a ligand contact to Ca(2+). Residues Thr-358, Thr-470, Thr-472, and Thr-509 are each glycosylated (O-linked (Man...) threonine). The N-linked (GlcNAc...) asparagine glycan is linked to Asn-558. 3 O-linked (Man...) threonine glycosylation sites follow: Thr-576, Thr-578, and Thr-580. Asn-637 carries N-linked (GlcNAc...) asparagine glycosylation. Residues 710-730 (ILGILGGILALLILILLLLLF) traverse the membrane as a helical segment. The Cytoplasmic portion of the chain corresponds to 731–882 (LRRRAVVKEP…ADMYGGGEDD (152 aa)). The disordered stretch occupies residues 747-767 (DTRDNVYYYDEEGGGEEDQDF). Residues Tyr-753, Tyr-754, and Tyr-755 each carry the phosphotyrosine; by SRC modification. Residues 755–767 (YDEEGGGEEDQDF) show a composition bias toward acidic residues. Positions 758-769 (EGGGEEDQDFDL) are required for binding CTNND1 and PSEN1. Phosphoserine is present on residues Ser-770, Ser-793, Ser-838, Ser-840, and Ser-846. Residues 811–882 (IDENLKAADT…ADMYGGGEDD (72 aa)) are required for binding alpha, beta and gamma catenins.

In terms of assembly, homodimer; disulfide-linked. Component of an E-cadherin/ catenin adhesion complex composed of at least E-cadherin/CDH1, beta-catenin/CTNNB1 or gamma-catenin/JUP, and potentially alpha-catenin/CTNNA1; the complex is located to adherens junctions. Found in a complex composed of CDH1, RAP1A and PKP3; PKP3 acts as a scaffold protein within the complex, the complex is required for CDH1 localization to mature desmosome cell junctions. Interacts with the TRPV4 and CTNNB1 complex. Interacts with CTNND1. The stable association of CTNNA1 is controversial as CTNNA1 was shown not to bind to F-actin when assembled in the complex. Alternatively, the CTNNA1-containing complex may be linked to F-actin by other proteins such as LIMA1. Interaction with PSEN1, cleaves CDH1 resulting in the disassociation of cadherin-based adherens junctions (CAJs). Interacts with AJAP1 and DLGAP5. Interacts with TBC1D2. Interacts with LIMA1. Interacts with CAV1. Interacts with PIP5K1C. Interacts with RAB8B. Interacts with DDR1; this stabilizes CDH1 at the cell surface and inhibits its internalization. Interacts with RAPGEF2. Interacts with KLRG1. Forms a ternary complex composed of ADAM10, CADH1 and EPHA4; within the complex, CADH1 is cleaved by ADAM10 which disrupts adherens junctions. Interacts with SPEF1. Interacts with CTNNB1 and PKP2. Interacts with AMOTL2; the interaction may facilitate binding of radial actin fibers to cell junction complexes. Interacts with DSG3; the interaction is required for CDH1 localization to developing adherens junctions. In terms of processing, during apoptosis or with calcium influx, cleaved by a membrane-bound metalloproteinase (ADAM10), PS1/gamma-secretase and caspase-3. Processing by the metalloproteinase, induced by calcium influx, causes disruption of cell-cell adhesion and the subsequent release of beta-catenin into the cytoplasm. The residual membrane-tethered cleavage product is rapidly degraded via an intracellular proteolytic pathway. Cleavage by caspase-3 releases the cytoplasmic tail resulting in disintegration of the actin microfilament system. The gamma-secretase-mediated cleavage promotes disassembly of adherens junctions. During development of the cochlear organ of Corti, cleavage by ADAM10 at adherens junctions promotes pillar cell separation. N-glycosylation at Asn-637 is essential for expression, folding and trafficking. Addition of bisecting N-acetylglucosamine by MGAT3 modulates its cell membrane location. Post-translationally, ubiquitinated by a SCF complex containing SKP2, which requires prior phosphorylation by CK1/CSNK1A1. Ubiquitinated by CBLL1/HAKAI, requires prior phosphorylation at Tyr-754. In terms of processing, O-glycosylated. O-manosylated by TMTC1, TMTC2, TMTC3 or TMTC4. Thr-285 and Thr-509 are O-mannosylated by TMTC2 or TMTC4 but not TMTC1 or TMTC3.

The protein localises to the cell junction. The protein resides in the adherens junction. It is found in the cell membrane. Its subcellular location is the endosome. It localises to the golgi apparatus. The protein localises to the trans-Golgi network. The protein resides in the cytoplasm. It is found in the desmosome. In terms of biological role, cadherins are calcium-dependent cell adhesion proteins. They preferentially interact with themselves in a homophilic manner in connecting cells; cadherins may thus contribute to the sorting of heterogeneous cell types. CDH1 is involved in mechanisms regulating cell-cell adhesions, mobility and proliferation of epithelial cells. Promotes organization of radial actin fiber structure and cellular response to contractile forces, via its interaction with AMOTL2 which facilitates anchoring of radial actin fibers to CDH1 junction complexes at the cell membrane. Plays a role in the early stages of desmosome cell-cell junction formation via facilitating the recruitment of DSG2 and DSP to desmosome plaques. Has a potent invasive suppressor role. It is a ligand for integrin alpha-E/beta-7. Its function is as follows. E-Cad/CTF2 promotes non-amyloidogenic degradation of Abeta precursors. Has a strong inhibitory effect on APP C99 and C83 production. The polypeptide is Cadherin-1 (CDH1) (Pongo abelii (Sumatran orangutan)).